We begin with the raw amino-acid sequence, 584 residues long: Pectinesterase 3 (584 aa).

Positions 1–50 (MTRIKEFFTKLSESSTNQNISNIPKKKKKLFLALFATLLVVAAVIGIVAG) are cleaved as a signal peptide. Residues 51 to 266 (VNSRKNSGDN…LSTGDRRLLQ (216 aa)) constitute a propeptide that is removed on maturation. Residues asparagine 108, asparagine 129, and asparagine 226 are each glycosylated (N-linked (GlcNAc...) asparagine). Residues threonine 348 and glutamine 378 each contribute to the substrate site. The active-site Proton donor is aspartate 401. A disulfide bond links cysteine 415 and cysteine 435. Residue aspartate 422 is the Nucleophile of the active site. The substrate site is built by arginine 490 and tryptophan 492.

The protein in the N-terminal section; belongs to the PMEI family. This sequence in the C-terminal section; belongs to the pectinesterase family. In the peel, expression is localized to the region of the flavedo close to the oil glands, and to the innermost layer of the albedo. In the lamella, expression is localized to the cell layers opposing the fruit tissue, and to the parenchyma surrounding the vascular tissue. In the fruit vesicles, expression is restricted to the peripheral cell layers and stalk cells. High levels of expression are detected in the core matrix.

The protein resides in the secreted. It is found in the cell wall. The enzyme catalyses [(1-&gt;4)-alpha-D-galacturonosyl methyl ester](n) + n H2O = [(1-&gt;4)-alpha-D-galacturonosyl](n) + n methanol + n H(+). The protein operates within glycan metabolism; pectin degradation; 2-dehydro-3-deoxy-D-gluconate from pectin: step 1/5. Its function is as follows. Acts in the modification of cell walls via demethylesterification of cell wall pectin. The chain is Pectinesterase 3 from Citrus sinensis (Sweet orange).